The following is a 156-amino-acid chain: WASQVSENRPVCKAIIQGKQFEGLVDTGADVSIIALNQWPKNWPKQKAVTGLVGIGTASEVYQSTEILHCLGPDNQESTVQPMITSIPLNLWGRDLLQQWGAEITMPAPLYSPTSQKIMTKMGYIPGKGLGKNEDGIKIPVEAKINQKREGIGYPF.

In terms of domain architecture, Peptidase A2 spans 21 to 96 (FEGLVDTGAD…IPLNLWGRDL (76 aa)). The active site involves D26. The G-patch domain maps to 111–156 (YSPTSQKIMTKMGYIPGKGLGKNEDGIKIPVEAKINQKREGIGYPF).

It belongs to the peptidase A2 family. HERV class-II K(HML-2) subfamily. As to quaternary structure, active as a homodimer. Autoproteolytically processed at the N-terminus. Expected C-terminal autoprocessing not detected. The sequence shown is that of the processed Pro protein.

It carries out the reaction Processing at the authentic HIV-1 PR recognition site and release of the mature p17 matrix and the p24 capsid protein, as a result of the cleavage of the -SQNY-|-PIVQ- cleavage site.. Functionally, retroviral proteases have roles in the processing of the primary translation products and the maturation of the viral particle. Endogenous Pro proteins may have kept, lost or modified their original function during evolution. The chain is Endogenous retrovirus group K member 113 Pro protein (HERVK_113) from Homo sapiens (Human).